A 78-amino-acid chain; its full sequence is Large ribosomal subunit protein bL28 (78 aa).

The tract at residues M1 to A21 is disordered.

It belongs to the bacterial ribosomal protein bL28 family.

The polypeptide is Large ribosomal subunit protein bL28 (Shewanella piezotolerans (strain WP3 / JCM 13877)).